The sequence spans 214 residues: Riboflavin kinase (214 aa).

The tract at residues 1 to 27 is disordered; it reads MRPDRPRDPVTGPDEGPESPYPIRMSG. The Mg(2+) site is built by Thr44 and Asn46. The active-site Nucleophile is Glu101.

This sequence belongs to the flavokinase family. Requires Zn(2+) as cofactor. Mg(2+) is required as a cofactor.

It catalyses the reaction riboflavin + ATP = FMN + ADP + H(+). The protein operates within cofactor biosynthesis; FMN biosynthesis; FMN from riboflavin (ATP route): step 1/1. Functionally, catalyzes the phosphorylation of riboflavin (vitamin B2) to form flavin mononucleotide (FMN) coenzyme. This chain is Riboflavin kinase (fmn1), found in Aspergillus niger (strain ATCC MYA-4892 / CBS 513.88 / FGSC A1513).